The chain runs to 467 residues: Uronate isomerase (467 aa).

This sequence belongs to the metallo-dependent hydrolases superfamily. Uronate isomerase family.

It catalyses the reaction D-glucuronate = D-fructuronate. It carries out the reaction aldehydo-D-galacturonate = keto-D-tagaturonate. It functions in the pathway carbohydrate metabolism; pentose and glucuronate interconversion. The sequence is that of Uronate isomerase from Solibacter usitatus (strain Ellin6076).